The primary structure comprises 397 residues: 8-amino-7-oxononanoate synthase (397 aa).

Residue R23 participates in substrate binding. 110–111 provides a ligand contact to pyridoxal 5'-phosphate; that stretch reads GY. H135 is a binding site for substrate. 3 residues coordinate pyridoxal 5'-phosphate: S181, H209, and T237. K240 bears the N6-(pyridoxal phosphate)lysine mark. T354 is a substrate binding site.

The protein belongs to the class-II pyridoxal-phosphate-dependent aminotransferase family. BioF subfamily. Homodimer. Pyridoxal 5'-phosphate serves as cofactor.

It catalyses the reaction 6-carboxyhexanoyl-[ACP] + L-alanine + H(+) = (8S)-8-amino-7-oxononanoate + holo-[ACP] + CO2. It participates in cofactor biosynthesis; biotin biosynthesis. Functionally, catalyzes the decarboxylative condensation of pimeloyl-[acyl-carrier protein] and L-alanine to produce 8-amino-7-oxononanoate (AON), [acyl-carrier protein], and carbon dioxide. The protein is 8-amino-7-oxononanoate synthase of Anaeromyxobacter dehalogenans (strain 2CP-C).